Reading from the N-terminus, the 369-residue chain is MSSEDIDKHVLRKYEVLQKIGKGAYGIVWKAIDKKTKQTVALKKIFDAFQNATDAQRTFREIMFLQELHGHENIIKLLNVIKADNDRDIYLVFEHMETDLHAVIRAKILEEIHKQYTIYQLLKALKYMHSANVLHRDIKPSNLLLNSECLVKVADFGLARSITSLESIAEANPVLTEYVATRWYRAPEILLGSTKYTKGVDMWSIGCILGELLGEKAMFPGNSTMNQLDLIIEVTGRPSAEDIEAIKSPFAGTMLESLPPSNPRSLSDMYPSASVDALDLLKKLLQFNPDKRITAEEALAHPFVTQFHNPAEEPHFDRIIKISIDDGQKFPIAEYRNRLYNDIIKKKKEERKKQTNPTKPDTTAPTLST.

Residues 14–304 (YEVLQKIGKG…AEEALAHPFV (291 aa)) form the Protein kinase domain. ATP-binding positions include 20–28 (IGKGAYGIV) and Lys-43. Asp-137 serves as the catalytic Proton acceptor. Phosphothreonine is present on Thr-176. Positions 176–178 (TEY) match the TXY motif. Phosphotyrosine is present on Tyr-178. The segment at 346–369 (KKKEERKKQTNPTKPDTTAPTLST) is disordered. The span at 355–369 (TNPTKPDTTAPTLST) shows a compositional bias: polar residues.

It belongs to the protein kinase superfamily. CMGC Ser/Thr protein kinase family. MAP kinase subfamily. Mg(2+) is required as a cofactor. In terms of processing, dually phosphorylated on Thr-176 and Tyr-178, which activates the enzyme.

It carries out the reaction L-seryl-[protein] + ATP = O-phospho-L-seryl-[protein] + ADP + H(+). The catalysed reaction is L-threonyl-[protein] + ATP = O-phospho-L-threonyl-[protein] + ADP + H(+). With respect to regulation, activated by tyrosine and threonine phosphorylation. Implicated in the relay of the cAMP chemotactic signal and cell differentiation. Important for receptor-mediated activation of adenylyl cyclase. The chain is Extracellular signal-regulated kinase 2 (erkB) from Dictyostelium discoideum (Social amoeba).